The primary structure comprises 1683 residues: ABC transporter 7 (1683 aa).

The chain crosses the membrane as a helical span at residues 24 to 44 (DYLRILLPAVVIGLSVLNLGF). The interval 53–93 (RSKSPSTHAYAPVSNGDNSRPGAHRTDISPDDDAIAQDDED) is disordered. A compositionally biased stretch (acidic residues) spans 81-93 (SPDDDAIAQDDED). The next 4 helical transmembrane spans lie at 127–147 (LSVV…VIAL), 157–177 (TLTG…LATL), 190–210 (HLWN…IGIF), and 221–241 (LAQI…FMAI). N-linked (GlcNAc...) asparagine glycosylation occurs at Asn-247. A run of 2 helical transmembrane segments spans residues 336-356 (GWAV…KAIL) and 368-388 (SVVW…SLGD). The ABC transmembrane type-1 1 domain maps to 338-664 (AVMSGMFTFA…LGDMLAHVQE (327 aa)). Residues 451–473 (GDNDESEDGKDGDKDKEDSSDEQ) are disordered. Asn-489 carries N-linked (GlcNAc...) asparagine glycosylation. A run of 2 helical transmembrane segments spans residues 496-516 (YLHF…VLLY) and 518-538 (VLGM…PVNI). A glycan (N-linked (GlcNAc...) asparagine) is linked at Asn-545. Transmembrane regions (helical) follow at residues 602-622 (VWAC…FFSF) and 632-648 (PLHP…FMLL). Residues 700–949 (IALKDAAFIW…GALGEEIAQK (250 aa)) enclose the ABC transporter 1 domain. ATP is bound at residue 742–749 (GPTGSGKT). Residues 952 to 998 (SETPNISRIPSRVPSSVGEGSGNTLLDTDGDDHLSKPKNAKKAKKAE) are disordered. Residue Asn-956 is glycosylated (N-linked (GlcNAc...) asparagine). Residues 1016 to 1036 (LYLASMGSWWFWVVAGCIFIS) traverse the membrane as a helical segment. The region spanning 1028–1351 (VVAGCIFISQ…NILWLVRLYS (324 aa)) is the ABC transmembrane type-1 2 domain. An N-linked (GlcNAc...) asparagine glycan is attached at Asn-1097. Helical transmembrane passes span 1111 to 1131 (AQYY…TAFL), 1182 to 1202 (VDQE…GITV), and 1204 to 1224 (VVLI…ITIA). Asn-1277 carries an N-linked (GlcNAc...) asparagine glycan. 2 helical membrane passes run 1304-1324 (LLGD…IGVI) and 1327-1347 (GWAG…LWLV). An ABC transporter 2 domain is found at 1392–1649 (VEFINYTTSY…GEGGSFKSMC (258 aa)). Residues Asn-1396 and Asn-1411 are each glycosylated (N-linked (GlcNAc...) asparagine). 1426–1433 (GRTGAGKS) provides a ligand contact to ATP. 2 N-linked (GlcNAc...) asparagine glycosylation sites follow: Asn-1541 and Asn-1552.

Belongs to the ABC transporter superfamily.

The protein localises to the membrane. Functionally, ABC transporter; part of the gene cluster that mediates the biosynthesis of pyriculol and pyriculariol, two heptaketides that induce lesion formation upon application on rice leaves but are dispensable for pathogenicity. With the MFS transporter MFS1, is most likely responsible for pyriculol and pyriculariol secretion and thereby may contribute to intrinsic resistance. This Pyricularia oryzae (strain 70-15 / ATCC MYA-4617 / FGSC 8958) (Rice blast fungus) protein is ABC transporter 7.